The sequence spans 283 residues: NADPH-dependent 7-cyano-7-deazaguanine reductase (283 aa).

Position 89–91 (89–91 (IES)) interacts with substrate. Residue 91–92 (SK) participates in NADPH binding. Cys190 functions as the Thioimide intermediate in the catalytic mechanism. The Proton donor role is filled by Asp197. 229 to 230 (HE) serves as a coordination point for substrate. 258–259 (RG) serves as a coordination point for NADPH.

The protein belongs to the GTP cyclohydrolase I family. QueF type 2 subfamily. Homodimer.

The protein resides in the cytoplasm. It carries out the reaction 7-aminomethyl-7-carbaguanine + 2 NADP(+) = 7-cyano-7-deazaguanine + 2 NADPH + 3 H(+). It participates in tRNA modification; tRNA-queuosine biosynthesis. Its function is as follows. Catalyzes the NADPH-dependent reduction of 7-cyano-7-deazaguanine (preQ0) to 7-aminomethyl-7-deazaguanine (preQ1). In Aromatoleum aromaticum (strain DSM 19018 / LMG 30748 / EbN1) (Azoarcus sp. (strain EbN1)), this protein is NADPH-dependent 7-cyano-7-deazaguanine reductase.